A 312-amino-acid chain; its full sequence is G-protein coupled receptor BILF1 (312 aa).

Residues 1–40 lie on the Extracellular side of the membrane; the sequence is MLSTMAPGSTVGTLVANMTSVNATEDACTKSYSAFLSGMT. 2 disulfides stabilise this stretch: C28–C258 and C97–C174. Residues 41-61 form a helical membrane-spanning segment; it reads SLLLVLLILLTLAGILFIIFV. Topologically, residues 62–67 are cytoplasmic; sequence RKLVHR. Residues 68-88 form a helical membrane-spanning segment; the sequence is MDVWLIALLIELLLWVLGKMI. Residues 89 to 95 are Extracellular-facing; that stretch reads QEFSSTG. Residues 96–116 form a helical membrane-spanning segment; the sequence is LCLLTQNMMFLGLMCSVWTHL. Topologically, residues 117–138 are cytoplasmic; sequence GMALEKTLALFSRTPKRTSHRN. The chain crosses the membrane as a helical span at residues 139–159; it reads VCLYLMGVFCLVLLLIIILLI. Topologically, residues 160–192 are extracellular; that stretch reads TMGPDANLNRGPNMCREGPTKGMHTAVQGLKAG. Residues 193-213 traverse the membrane as a helical segment; the sequence is CYLLAAVLIVLLTVIIIWKLL. Over 214 to 228 the chain is Cytoplasmic; that stretch reads RTKFGRKPRLICNVT. Residues 229–249 form a helical membrane-spanning segment; sequence FTGLICAFSWFMLSLPLLFLG. Topologically, residues 250-269 are extracellular; sequence EAGSLGFDCTESLVARYYPG. A helical membrane pass occupies residues 270-290; that stretch reads PAACLALLLIILYAWSFSHFM. The Cytoplasmic portion of the chain corresponds to 291–312; the sequence is DSLKNQVTVTARYFRRVPSQST.

Belongs to the Epstein-Barr virus BILF1 protein family. Interacts with host CXCR4 to form higher-order heterooligomers. Interacts with host Gi heterotrimer.

The protein resides in the host cell membrane. It localises to the host mitochondrion outer membrane. Functionally, constitutively active, ligand-independent G protein-coupled receptor that has immunoevasive and oncogenic activities. Couples with the host inhibitory G protein (Gi) in order to disrupt the host chemokine signaling. As a consequence of its constitutive activity, mediates host CXCR4 inhibition. Enhances degradation of host major histocompatibility complex class I antigens via lysosomes, thereby modulating the antigen presentation to cytotoxic T cells. Targets selectively HLA-A, HLA-Band HLA-E molecules. Targets also newly synthesized MHC-I/peptide complexes en route to the host cell surface. Inhibits the host EIF2AK2/PKR phosphorylation. Displays tranforming activity. Utilizes its C-terminal tail to trigger host MAVS UFMylation via PARK2, resulting in selective MAVS removal from mitochondrial membranes and routing to lysosomes to prevent viral activation of the NLRP3 inflammasome. The protein is G-protein coupled receptor BILF1 of Homo sapiens (Human).